Reading from the N-terminus, the 23-residue chain is MWTKPAYTDLRIGFEVTMYFASR.

Positions 15 to 19 (EVTMY) form a cross-link, pyrroloquinoline quinone (Glu-Tyr).

This sequence belongs to the PqqA family.

Its pathway is cofactor biosynthesis; pyrroloquinoline quinone biosynthesis. Required for coenzyme pyrroloquinoline quinone (PQQ) biosynthesis. PQQ is probably formed by cross-linking a specific glutamate to a specific tyrosine residue and excising these residues from the peptide. In Pseudomonas putida (strain W619), this protein is Coenzyme PQQ synthesis protein A.